The following is an 80-amino-acid chain: RNA-binding protein Hfq (80 aa).

The 61-residue stretch at 10–70 folds into the Sm domain; the sequence is DLFLNTVRKQ…ISTIMPGQPM (61 aa).

The protein belongs to the Hfq family. As to quaternary structure, homohexamer.

Functionally, RNA chaperone that binds small regulatory RNA (sRNAs) and mRNAs to facilitate mRNA translational regulation in response to envelope stress, environmental stress and changes in metabolite concentrations. Also binds with high specificity to tRNAs. The protein is RNA-binding protein Hfq of Rhizobium etli (strain CIAT 652).